Consider the following 503-residue polypeptide: Medium/long-chain-fatty-acid--CoA ligase FadD17 (503 aa).

Belongs to the ATP-dependent AMP-binding enzyme family.

It catalyses the reaction a medium-chain fatty acid + ATP + CoA = a medium-chain fatty acyl-CoA + AMP + diphosphate. The enzyme catalyses a long-chain fatty acid + ATP + CoA = a long-chain fatty acyl-CoA + AMP + diphosphate. Its pathway is lipid metabolism; fatty acid biosynthesis. Catalyzes the activation of medium/long-chain fatty acids as acyl-coenzyme A (acyl-CoA), which are then transferred to the multifunctional polyketide synthase (PKS) type III for further chain extension. The polypeptide is Medium/long-chain-fatty-acid--CoA ligase FadD17 (fadD17) (Mycobacterium marinum (strain ATCC BAA-535 / M)).